The primary structure comprises 405 residues: Arginine deiminase (405 aa).

Cys395 functions as the Amidino-cysteine intermediate in the catalytic mechanism.

Belongs to the arginine deiminase family.

It is found in the cytoplasm. The catalysed reaction is L-arginine + H2O = L-citrulline + NH4(+). It participates in amino-acid degradation; L-arginine degradation via ADI pathway; carbamoyl phosphate from L-arginine: step 1/2. In Rhodococcus erythropolis (strain PR4 / NBRC 100887), this protein is Arginine deiminase.